Reading from the N-terminus, the 206-residue chain is Probable GTP-binding protein EngB (206 aa).

Residues 27-201 (SGIEVAFAGR…EEKLNQWYSK (175 aa)) form the EngB-type G domain. Residues 35–42 (GRSNAGKS), 62–66 (GRTQL), 80–83 (DLPG), 147–150 (TKAD), and 180–182 (FSS) contribute to the GTP site. 2 residues coordinate Mg(2+): Ser-42 and Thr-64.

Belongs to the TRAFAC class TrmE-Era-EngA-EngB-Septin-like GTPase superfamily. EngB GTPase family. Requires Mg(2+) as cofactor.

In terms of biological role, necessary for normal cell division and for the maintenance of normal septation. The protein is Probable GTP-binding protein EngB of Idiomarina loihiensis (strain ATCC BAA-735 / DSM 15497 / L2-TR).